Reading from the N-terminus, the 621-residue chain is Protein Rep78 (621 aa).

Positions 1 to 199 (MPGFYEIVIK…AQHLTHVSQT (199 aa)) constitute a PV NS1-Nuc domain. A divalent metal cation is bound by residues glutamate 83, histidine 90, and histidine 92. An RCR-2 motif is present at residues 90 to 92 (HMH). Tyrosine 156 (for nuclease activity) is an active-site residue. Positions 156 to 160 (YLLPK) match the RCR-3 motif. The span at 196 to 211 (VSQTQEQNKENQNPNS) shows a compositional bias: polar residues. A disordered region spans residues 196-216 (VSQTQEQNKENQNPNSDAPVI). An SF3 helicase domain is found at 308-463 (DPQYAASVFL…LDHDFGKVTK (156 aa)). Position 334 to 341 (334 to 341 (GPATTGKT)) interacts with ATP. The interval 489–520 (GGAKKRPAPSDADISEPKRVRESVAQPSTSDA) is disordered.

As to quaternary structure, hexamer when associated with the viral DNA ori sequence. Interacts with host PRKX. Interacts with host TOPORS. Interacts with host TBP and SUB1/PC4; these interactions play important roles in transcriptional regulation. A divalent metal cation is required as a cofactor.

The protein resides in the host nucleus. Plays an essential role in the initiation of viral DNA synthesis. Binds specifically to an inverted terminal repeat element (ITR) on the 3' and 5' ends of the viral DNA, where it cleaves a site specifically to generate a priming site for initiation of the synthesis of a complementary strand. Also plays a role as transcriptional regulator, DNA helicase and as key factors in site-specific integration of the viral genome. Regulates host PKA activity by interacting with host PRKX as a mechanism of interfering with helper virus propagation and promoting its own replication. Inhibits the host cell cycle G1/S, S and G2/M transitions. These arrests may provide essential cellular factors for viral DNA replication. This is Protein Rep78 (Rep78) from Adeno-associated virus 2 (isolate Srivastava/1982) (AAV-2).